A 92-amino-acid chain; its full sequence is MEISSDNPDHGFQFPGTFELSAMGTAERGLETELPRLLAATGVELLEESISWKHSSSGKYVSVRIGFRADTREQFDSAHQALREHPEVKWTL.

This sequence belongs to the UPF0250 family.

The sequence is that of UPF0250 protein XCC3453 from Xanthomonas campestris pv. campestris (strain ATCC 33913 / DSM 3586 / NCPPB 528 / LMG 568 / P 25).